We begin with the raw amino-acid sequence, 888 residues long: Microtubule-associated protein 10 (888 aa).

Disordered regions lie at residues 398–454 (EHKG…VTKG), 508–602 (SLAA…TSLR), 620–642 (NILRGKWKKQVQSPGLSRQDPAV), 654–683 (QVKAASAADTNENRPPSRKSSCESTSELQC), and 699–836 (TENN…YEPS). Over residues 524 to 541 (LTDSNGKVSSWAVQSQLP) the composition is skewed to polar residues. Residues 572 to 589 (ESSRTREAKQSHAMKKET) show a composition bias toward basic and acidic residues. The span at 590–600 (VGQSENKTVTS) shows a compositional bias: polar residues. Composition is skewed to polar residues over residues 661-683 (ADTNENRPPSRKSSCESTSELQC), 699-714 (TENNSRSLPAPDSSTG), 722-745 (SWASKSSEARLSTRKNSSESSSVF), 772-786 (EASSLSTSDFSSQWT), and 825-836 (ARTSQVSSYEPS).

In terms of assembly, interacts (via middle region) with microtubules.

It localises to the cytoplasm. It is found in the cytoskeleton. Its subcellular location is the spindle pole. The protein resides in the microtubule organizing center. The protein localises to the centrosome. It localises to the midbody. Functionally, microtubule-associated protein (MAP) that plays a role in the regulation of cell division; promotes microtubule stability and participates in the organization of the spindle midzone and normal progress of cytokinesis. The chain is Microtubule-associated protein 10 (Map10) from Rattus norvegicus (Rat).